The primary structure comprises 432 residues: MTDTETVLVAGGQDWNEIVEAARGADPGERIVVNMGPQHPSTHGVLRLILEIEGETVTEARCGIGYLHTGIEKNLEYRYWTQGVTFVTRMDYLSPFFNETAYCLGVEKLLGITDEIPERVNVIRVMMMELNRISSHLVALATGGMELGAMTPMFVGFRAREIILSLFESITGLRMNSAYIRPGGVAQDLPPDGPTEIAKAIADLRQPLREMGDLLNENAIWKARTQDVGYLDLAGCMALGITGPILRSTGLPHDLRKSEPYCGYENYEFDVITADGCDAYGRYMIRVKEMWESIKIVEQCLDRLRPGPTMIEDRKLAWPADLKVGPDGMGNSPEHIAKIMGSSMEALIHHFKLVTEGIRVPAGQVYVAVESPRGELGVHMVSDGGTRPYRVHYRDPSFTNLQAVAAMSEGGMVADLITAVASIDPVMGGVDR.

The protein belongs to the complex I 49 kDa subunit family. NDH-1 is composed of 14 different subunits. Subunits NuoB, C, D, E, F, and G constitute the peripheral sector of the complex.

It is found in the cell membrane. It carries out the reaction a quinone + NADH + 5 H(+)(in) = a quinol + NAD(+) + 4 H(+)(out). Its function is as follows. NDH-1 shuttles electrons from NADH, via FMN and iron-sulfur (Fe-S) centers, to quinones in the respiratory chain. The immediate electron acceptor for the enzyme in this species is believed to be a menaquinone. Couples the redox reaction to proton translocation (for every two electrons transferred, four hydrogen ions are translocated across the cytoplasmic membrane), and thus conserves the redox energy in a proton gradient. This chain is NADH-quinone oxidoreductase subunit D, found in Mycobacterium marinum (strain ATCC BAA-535 / M).